A 476-amino-acid chain; its full sequence is ATP synthase subunit beta (476 aa).

Position 161–168 (161–168) interacts with ATP; that stretch reads GGAGVGKT.

The protein belongs to the ATPase alpha/beta chains family. As to quaternary structure, F-type ATPases have 2 components, CF(1) - the catalytic core - and CF(0) - the membrane proton channel. CF(1) has five subunits: alpha(3), beta(3), gamma(1), delta(1), epsilon(1). CF(0) has three main subunits: a(1), b(2) and c(9-12). The alpha and beta chains form an alternating ring which encloses part of the gamma chain. CF(1) is attached to CF(0) by a central stalk formed by the gamma and epsilon chains, while a peripheral stalk is formed by the delta and b chains.

It localises to the cell membrane. It catalyses the reaction ATP + H2O + 4 H(+)(in) = ADP + phosphate + 5 H(+)(out). In terms of biological role, produces ATP from ADP in the presence of a proton gradient across the membrane. The catalytic sites are hosted primarily by the beta subunits. This chain is ATP synthase subunit beta, found in Mycolicibacterium gilvum (strain PYR-GCK) (Mycobacterium gilvum (strain PYR-GCK)).